Here is a 215-residue protein sequence, read N- to C-terminus: Pyridoxine/pyridoxamine 5'-phosphate oxidase (215 aa).

Residues 11-14 (RRDY) and K69 contribute to the substrate site. FMN contacts are provided by residues 64 to 69 (RVVLLK), 79 to 80 (YT), K86, and Q108. Positions 126, 130, and 134 each coordinate substrate. FMN contacts are provided by residues 143-144 (QS) and W188. Position 194–196 (194–196 (RLH)) interacts with substrate. FMN is bound at residue R198.

The protein belongs to the pyridoxamine 5'-phosphate oxidase family. As to quaternary structure, homodimer. FMN serves as cofactor.

The catalysed reaction is pyridoxamine 5'-phosphate + O2 + H2O = pyridoxal 5'-phosphate + H2O2 + NH4(+). The enzyme catalyses pyridoxine 5'-phosphate + O2 = pyridoxal 5'-phosphate + H2O2. Its pathway is cofactor metabolism; pyridoxal 5'-phosphate salvage; pyridoxal 5'-phosphate from pyridoxamine 5'-phosphate: step 1/1. It functions in the pathway cofactor metabolism; pyridoxal 5'-phosphate salvage; pyridoxal 5'-phosphate from pyridoxine 5'-phosphate: step 1/1. Catalyzes the oxidation of either pyridoxine 5'-phosphate (PNP) or pyridoxamine 5'-phosphate (PMP) into pyridoxal 5'-phosphate (PLP). The protein is Pyridoxine/pyridoxamine 5'-phosphate oxidase of Legionella pneumophila (strain Lens).